A 457-amino-acid polypeptide reads, in one-letter code: 5' exonuclease Apollo (457 aa).

The TBM motif lies at 425 to 437; sequence ELPKQYLLTPLNA.

The protein belongs to the DNA repair metallo-beta-lactamase (DRMBL) family. Interacts with TERF2; the interaction is direct.

It is found in the chromosome. The protein resides in the telomere. Its subcellular location is the nucleus. The enzyme catalyses a beta-lactam + H2O = a substituted beta-amino acid. In terms of biological role, 5'-3' exonuclease that plays a central role in telomere maintenance and protection during S-phase. Participates in the protection of telomeres against non-homologous end-joining (NHEJ)-mediated repair, thereby ensuring that telomeres do not fuse. Plays a key role in telomeric loop (T loop) formation by being recruited by TERF2 at the leading end telomeres and by processing leading-end telomeres immediately after their replication via its exonuclease activity: generates 3' single-stranded overhang at the leading end telomeres avoiding blunt leading-end telomeres that are vulnerable to end-joining reactions and expose the telomere end in a manner that activates the DNA repair pathways. May be required for DNA interstrand cross-link repair. Possesses beta-lactamase activity, catalyzing the hydrolysis of penicillin G and nitrocefin. Exhibits no activity towards other beta-lactam antibiotic classes including cephalosporins (cefotaxime) and carbapenems (imipenem). The protein is 5' exonuclease Apollo (DCLRE1B) of Gallus gallus (Chicken).